Reading from the N-terminus, the 205-residue chain is S-crystallin SL11 (205 aa).

Positions Pro2 to Gly80 constitute a GST N-terminal domain. Residues Asn82 to Phe205 enclose the GST C-terminal domain.

The protein belongs to the GST superfamily. In terms of tissue distribution, lens.

Its function is as follows. S-crystallins are structural components of squids and octopi eye lens. Contains relatively little if any GST activity. This Nototodarus sloanii (Wellington flying squid) protein is S-crystallin SL11.